A 160-amino-acid chain; its full sequence is MTLEELVACDNAAQKMQTVSAAVEELLVAAQLQDRLTVGVYESAKLMNVDPDSVVLCLLAIDEEEEDDIALQIHFTLIQSFCCENDIDIVRVSGMQRLAQLLGEPAETQGTTEARDLHCLLVTNPHTDTWKSHGLVEVASYCEESRGNNQWVPYISLQER.

This sequence belongs to the GADD45 family. Interacts with GADD45GIP1.

Involved in the regulation of growth and apoptosis. Mediates activation of stress-responsive MTK1/MEKK4 MAPKKK. The sequence is that of Growth arrest and DNA damage-inducible protein GADD45 beta (GADD45B) from Bos taurus (Bovine).